We begin with the raw amino-acid sequence, 628 residues long: 1-deoxy-D-xylulose-5-phosphate synthase (628 aa).

Residues histidine 80 and 121–123 (GHS) contribute to the thiamine diphosphate site. Position 152 (aspartate 152) interacts with Mg(2+). Thiamine diphosphate-binding positions include 153–154 (GG), asparagine 181, tyrosine 289, and glutamate 370. Residue asparagine 181 participates in Mg(2+) binding.

This sequence belongs to the transketolase family. DXPS subfamily. In terms of assembly, homodimer. It depends on Mg(2+) as a cofactor. Requires thiamine diphosphate as cofactor.

It catalyses the reaction D-glyceraldehyde 3-phosphate + pyruvate + H(+) = 1-deoxy-D-xylulose 5-phosphate + CO2. The protein operates within metabolic intermediate biosynthesis; 1-deoxy-D-xylulose 5-phosphate biosynthesis; 1-deoxy-D-xylulose 5-phosphate from D-glyceraldehyde 3-phosphate and pyruvate: step 1/1. Catalyzes the acyloin condensation reaction between C atoms 2 and 3 of pyruvate and glyceraldehyde 3-phosphate to yield 1-deoxy-D-xylulose-5-phosphate (DXP). The polypeptide is 1-deoxy-D-xylulose-5-phosphate synthase (Alkalilimnicola ehrlichii (strain ATCC BAA-1101 / DSM 17681 / MLHE-1)).